A 92-amino-acid polypeptide reads, in one-letter code: Small ribosomal subunit protein uS19 (92 aa).

This sequence belongs to the universal ribosomal protein uS19 family.

In terms of biological role, protein S19 forms a complex with S13 that binds strongly to the 16S ribosomal RNA. The protein is Small ribosomal subunit protein uS19 of Desulfosudis oleivorans (strain DSM 6200 / JCM 39069 / Hxd3) (Desulfococcus oleovorans).